Consider the following 266-residue polypeptide: Small ribosomal subunit protein eS1 (266 aa).

The tract at residues 235-266 (GGAGGAAKASGDDTGAKVERADGYEPPIQETV) is disordered. A compositionally biased stretch (basic and acidic residues) spans 244-257 (SGDDTGAKVERADG).

The protein belongs to the eukaryotic ribosomal protein eS1 family. As to quaternary structure, component of the small ribosomal subunit. Mature ribosomes consist of a small (40S) and a large (60S) subunit. The 40S subunit contains about 33 different proteins and 1 molecule of RNA (18S). The 60S subunit contains about 49 different proteins and 3 molecules of RNA (28S, 5.8S and 5S).

It localises to the cytoplasm. Functionally, component of the small ribosomal subunit. The ribosome is a large ribonucleoprotein complex responsible for the synthesis of proteins in the cell. The protein is Small ribosomal subunit protein eS1 (rps3a) of Oryzias latipes (Japanese rice fish).